The following is a 31-amino-acid chain: Nemertide alpha-7 (31 aa).

Disulfide bonds link Cys2-Cys16, Cys9-Cys20, and Cys15-Cys26. The residue at position 29 (Pro29) is a 4-hydroxyproline.

It belongs to the nemertide family. In terms of tissue distribution, confined to the epidermis and to the mucus layer.

The protein localises to the secreted. Functionally, potent toxin, demonstrating strong inhibitory effects on insect sodium channels (Nav) and reduced activity on mammalian sodium channels. Potently inhibits inactivation of insect sodium channels of B.germanica (BgNav1) (EC(50)=9.5 nM). The toxin also delays the inactivation of most mammalian Nav (human Nav1.1/SCN1A; EC(50)=171.5 nM, rat Nav1.2/SCN2A; EC(50)=50.4 nM, rat Nav1.3/SCN3A; EC(50)=170.2 nM, rat Nav1.4/SCN4A; EC(50)=810.6 nM, human Nav1.5/SCN5A; EC(50)=155.6 nM, mouse Nav1.6/SCN8A; EC(50)=147.6 nM, human Nav1.9/SCN9A; EC(50)=129 nM). Inactivation is completely prevented by a concentration of 1 uM, resulting in sustained, non-inactivating currents. In addition, the toxin significantly enhances the recovery from inactivation, and the open state is not required for the toxin to interact with the channel. In vivo, injection into brine shrimp (Artemia salina) stops movement or causes death after 24 hours (EC(50)=6.1 uM). The chain is Nemertide alpha-7 from Lineus ruber (Red bootlace).